A 38-amino-acid polypeptide reads, in one-letter code: Conotoxin FVIA (38 aa).

A propeptide spanning residues 1–12 (ILSLSLLDRSTR) is cleaved from the precursor. 3 disulfide bridges follow: C13–C28, C20–C32, and C27–C37. C37 carries the cysteine amide modification.

The protein belongs to the conotoxin O1 superfamily. In terms of tissue distribution, expressed by the venom duct.

The protein localises to the secreted. Functionally, omega-conotoxins act at presynaptic membranes, they bind and block voltage-gated calcium channels (Cav). This peptide reversibly and selectively inhibits Cav2.2/CACNA1B (IC(50)=11.5 nM) voltage-gated calcium channels. Channel time recovery after toxin exposure is short (about 50 seconds). In vivo, it effectively and dose-dependently reduces nociceptive behavior in the formalin test and in neuropathic pain models, and reduces mechanical and thermal allodynia in the tail nerve injury rat model. It also shows significant analgesic effects on writhing in mouse neurotransmitter- and cytokine-induced pain models, though it has no effect on acute thermal pain and interferon-gamma-induced pain. It also depresses blood pressure immediately after administration, but pressure recovers relatively quickly and completely. The sequence is that of Conotoxin FVIA from Conus fulmen (Thunderbolt cone).